The following is a 147-amino-acid chain: Hemoglobin subunit gamma (147 aa).

Positions 3-147 constitute a Globin domain; the sequence is YFTAEEKAAI…VASALARKYH (145 aa). 2 residues coordinate heme b: H64 and H93.

The protein belongs to the globin family. Heterotetramer of two alpha chains and two gamma chains in fetal hemoglobin (Hb F). In terms of tissue distribution, red blood cells.

Gamma chains make up the fetal hemoglobin F, in combination with alpha chains. The protein is Hemoglobin subunit gamma (HBG) of Dugong dugon (Dugong).